Here is a 797-residue protein sequence, read N- to C-terminus: Calcium-transporting ATPase CtpE (797 aa).

3 helical membrane-spanning segments follow: residues 55 to 75 (LLLI…LLII), 215 to 235 (ILQF…YTQL), and 254 to 274 (VPMV…VGVV). The active-site 4-aspartylphosphate intermediate is aspartate 301. Mg(2+) is bound by residues aspartate 301, threonine 303, and aspartate 536. 6 helical membrane passes run 601–621 (TVYS…AIPL), 633–653 (IHVT…LSLA), 667–687 (VMTS…VTYL), 703–723 (ASTA…AVIA), 729–749 (WRLA…SLPL), and 764–784 (TSIA…MWWI).

It belongs to the cation transport ATPase (P-type) (TC 3.A.3) family.

It is found in the cell membrane. The enzyme catalyses Ca(2+)(in) + ATP + H2O = Ca(2+)(out) + ADP + phosphate + H(+). Its function is as follows. P-type ATPase involved in specific uptake of calcium. This chain is Calcium-transporting ATPase CtpE (ctpE), found in Mycobacterium bovis (strain ATCC BAA-935 / AF2122/97).